Consider the following 518-residue polypeptide: Protein CYCLOPS (518 aa).

Positions aspartate 401–aspartate 451 are disordered. 2 consecutive short sequence motifs (nuclear localization signal) follow at residues lysine 402 to lysine 405 and lysine 426 to arginine 429. Residues serine 433 to asparagine 443 show a composition bias toward basic and acidic residues. Residues methionine 452 to methionine 518 adopt a coiled-coil conformation.

This sequence belongs to the CYCLOPS family. In terms of assembly, forms homodimers. Interacts with CCAMK. Phosphorylated at the N-terminus by CCAMK. As to expression, expressed in roots.

It localises to the nucleus. In terms of biological role, involved in symbiotic signaling. Required for root infection by symbiotic rhizobia, infection thread (IT) formation, and nodule development. Probably not involved in nodule organogenesis. Involved in arbuscular mycorrhizal (AM) symbiosis. Required for fungal infection of the outer cortical cell layers, and for arbuscule development during the AM symbiosis, by binding, as a complex comprising CCaMK, CYCLOPS, and DELLA, to RAM1 promoter cis element thus promoting its expression. Acts downstream of CCAMK. Binds to the promoter of ERN1 and strongly transactivates ERN1, a transcriptional regulator required for nodulation. This is Protein CYCLOPS from Lotus japonicus (Lotus corniculatus var. japonicus).